We begin with the raw amino-acid sequence, 268 residues long: GTP cyclohydrolase 1 type 2 homolog (268 aa).

H66, H67, D105, H227, and E231 together coordinate a divalent metal cation.

This sequence belongs to the GTP cyclohydrolase I type 2/NIF3 family. In terms of assembly, homohexamer.

The sequence is that of GTP cyclohydrolase 1 type 2 homolog from Clostridium acetobutylicum (strain ATCC 824 / DSM 792 / JCM 1419 / IAM 19013 / LMG 5710 / NBRC 13948 / NRRL B-527 / VKM B-1787 / 2291 / W).